Here is a 152-residue protein sequence, read N- to C-terminus: Transcriptional regulator MraZ (152 aa).

2 consecutive SpoVT-AbrB domains span residues 5–52 and 81–124; these read LNPI…THPQ and ATEV…GKSQ.

This sequence belongs to the MraZ family. In terms of assembly, forms oligomers.

It localises to the cytoplasm. Its subcellular location is the nucleoid. This is Transcriptional regulator MraZ from Coxiella burnetii (strain Dugway 5J108-111).